The sequence spans 114 residues: rRNA-processing protein cgrA (114 aa).

Residues 1 to 96 (MSASESAPSA…YDKMAEKMHR (96 aa)) form a disordered region. Positions 40–101 (AKRLEARKHQ…EKMHRKRVER (62 aa)) form a coiled coil. Positions 41-93 (KRLEARKHQEAVKEHERELKEEKEAERQAHIQRIKDRRAAKEEKERYDKMAEK) are enriched in basic and acidic residues.

This sequence belongs to the CGR1 family.

The protein localises to the nucleus. The protein resides in the nucleolus. Functionally, involved in nucleolar integrity and required for processing of the pre-rRNA for the 60S ribosome subunit. The sequence is that of rRNA-processing protein cgrA (cgrA) from Aspergillus terreus (strain NIH 2624 / FGSC A1156).